A 210-amino-acid polypeptide reads, in one-letter code: MTQAAIDYNKLKSAPVHLDAYIKSIDSESKEGVVKIRGFANTISKDRAGDVIPASAWKTSNALTNYMKNPIILFGHDHRRPIGKCIDLNPTEMGLEIECEINESSDPAIFSLIKNGVLKTFSIGFRCLDAEWDEATDIFIIKDLELYEVSVVSVPCNQDSTFNLAKSMNGHDYTEWRKSFTAISSKAVPAQERNLSELEKLAIALGYVKE.

Positions 1-23 (MTQAAIDYNKLKSAPVHLDAYIK) are excised as a propeptide. Residues His-76, Ser-122, and Glu-148 contribute to the active site. A propeptide spanning residues 167–210 (SMNGHDYTEWRKSFTAISSKAVPAQERNLSELEKLAIALGYVKE) is cleaved from the precursor.

It belongs to the HK97 prohead protease protein family. Cleaves itself autocatalytically to yield the mature form of the protease.

It localises to the virion. Serine protease involved in capsid assembly and maturation. Cleaves the major capsid protein, the decoration protein, the portal protein to yield mature procapsids competent for DNA packaging. Acts as a trigger for assembly of the capsid protein. This Escherichia coli (Enterobacteria phage T5) protein is Prohead protease.